We begin with the raw amino-acid sequence, 407 residues long: Lysophospholipid transporter LplT (407 aa).

Helical transmembrane passes span 18–38, 53–73, 91–111, 139–159, 163–183, 229–249, 257–277, 286–306, 310–330, 343–365, and 375–395; these read AVII…FATL, FLQM…GQIA, AGAL…LVGV, LMEA…GVLA, IYGA…ANML, WGAG…ALGI, LLNA…AKLV, LPAG…HNLM, SLLI…NALL, AIAV…YSLV, and IGIG…VWLI.

This sequence belongs to the major facilitator superfamily. LplT (TC 2.A.1.42) family.

The protein localises to the cell inner membrane. In terms of biological role, catalyzes the facilitated diffusion of 2-acyl-glycero-3-phosphoethanolamine (2-acyl-GPE) into the cell. This is Lysophospholipid transporter LplT from Pectobacterium carotovorum subsp. carotovorum (strain PC1).